The following is a 131-amino-acid chain: uncharacterized protein (131 aa).

A run of 2 helical transmembrane segments spans residues 61–81 and 102–122; these read LLLL…YLPI and VCSI…ALRY.

The protein resides in the membrane. This is an uncharacterized protein from Saccharomyces cerevisiae (strain ATCC 204508 / S288c) (Baker's yeast).